The sequence spans 167 residues: Small ribosomal subunit protein uS5 (167 aa).

Residues 12–75 (LQEKLIAVNR…EKARRNMVTI (64 aa)) form the S5 DRBM domain.

The protein belongs to the universal ribosomal protein uS5 family. In terms of assembly, part of the 30S ribosomal subunit. Contacts proteins S4 and S8.

In terms of biological role, with S4 and S12 plays an important role in translational accuracy. Its function is as follows. Located at the back of the 30S subunit body where it stabilizes the conformation of the head with respect to the body. In Vibrio vulnificus (strain CMCP6), this protein is Small ribosomal subunit protein uS5.